The sequence spans 67 residues: Large ribosomal subunit protein uL29 (67 aa).

It belongs to the universal ribosomal protein uL29 family.

This is Large ribosomal subunit protein uL29 from Agathobacter rectalis (strain ATCC 33656 / DSM 3377 / JCM 17463 / KCTC 5835 / VPI 0990) (Eubacterium rectale).